Reading from the N-terminus, the 182-residue chain is Ribosomal RNA small subunit methyltransferase G (182 aa).

S-adenosyl-L-methionine contacts are provided by residues Gly-58, Phe-63, 109–110, and Arg-123; that span reads IE.

It belongs to the methyltransferase superfamily. RNA methyltransferase RsmG family.

The protein resides in the cytoplasm. It carries out the reaction guanosine(527) in 16S rRNA + S-adenosyl-L-methionine = N(7)-methylguanosine(527) in 16S rRNA + S-adenosyl-L-homocysteine. In terms of biological role, specifically methylates the N7 position of guanine in position 527 of 16S rRNA. This is Ribosomal RNA small subunit methyltransferase G from Campylobacter fetus subsp. fetus (strain 82-40).